A 215-amino-acid chain; its full sequence is Protein C' (215 aa).

The interval 12 to 34 (MPSFLKKILKLRGRRQEDESRSR) is disordered. The involved in self-degradation and in host STAT1 degradation stretch occupies residues 15 to 22 (FLKKILKL). The segment covering 25–35 (RRQEDESRSRM) has biased composition (basic and acidic residues). Polar residues predominate over residues 36–66 (LSDSSTQSYQVNQLTSEETEAGSTIPSTPSK).

The protein belongs to the respirovirus protein C family. The different isoforms interact (via C-terminus) with unphosphorylated and phosphorylated human STAT1 (via N-terminus), favoring the formation of parallel STAT1 homodimers. The different isoforms do not interact with host STAT2. C protein interacts with L protein; this interaction has an inhibitory effect on viral transcription and replication. Protein Y1 is produced not only by alternative initiation, but also by proteolytic cleavage of C'. Only alternative initiation is detected in vitro, whereas in vivo cleavage seems to be predominant.

The protein resides in the host cytoplasm. Its function is as follows. The different products prevent the establishment of cellular antiviral state by blocking the interferon-alpha/beta (IFN-alpha/beta) and IFN-gamma signaling pathways. They inhibit IFN-alpha/beta induced tyrosine phosphorylation of STAT1 and STAT2. Blocking the IFN-alpha/beta pathway requires binding to STAT1 in the cytoplasm. They inhibit IFN-gamma induced serine phosphorylation of STAT1. Block the IFN-gamma pathway by binding to and stabilizing the parallel form of the STAT1 dimer, further inducing high-molecular-weight complex formation and inhibition of transcription by IFN-gamma. May also have a role in preventing the cell to enter apoptosis. Modulate regulation of viral transcription and replication. Overexpression inhibits the viral RNA polymerase. The absence of all C', C and Y1 proteins leads to viral delayed growth. Plays an important role in virion particles release. Modulates virion shape. The polypeptide is Protein C' (P/V/C) (Cavia cutleri (Guinea pig)).